Reading from the N-terminus, the 81-residue chain is Mipartoxin-1 (81 aa).

A signal peptide spans 1–21 (MKTLLLTLVVVTIVCLDLGNS). Disulfide bonds link C24–C42, C35–C61, C65–C73, and C74–C79.

This sequence belongs to the three-finger toxin family. Short-chain subfamily. In terms of processing, contains 4 disulfide bonds. In terms of tissue distribution, expressed by the venom gland.

It localises to the secreted. Its function is as follows. Snake venom neurotoxin that blocks neuromuscular transmission on both avian and mouse nerve-muscle preparations, presenting a postsynaptic action through the nicotinic acetylcholine receptor (nAChR). Reversibly inhibits twitches in mouse phrenic nerve diaphragm and irreversibly in chick biventer cervicis muscle. Has no cytotoxic activity towards C2C12 cells up to 180 ug/ml. The chain is Mipartoxin-1 from Micrurus mipartitus (Red-tailed coral snake).